The chain runs to 601 residues: MNTAFAGFDENRAGRRAPGCTGRPAFGLGMDSQQDVVNLDQGGCCPALRKLLPRGFWDEARALFVLSGPLFLFQVLNFLTYVVGTVFCGHLGKVELASVTLGVAFVNVCGVSVGAGLSSACDTLMSQSFGSPNKKHVGVILQRGSLILLLCCLPCWALFLNTQHILLLFRQDPAVSRLTQDYAMIFIPGLPAIFLYSLLAKYLQNQGIVWPQVLSGVVGNCVNGVANYALVSVLNLGVRGSAYANTISQFVQAAFLFLHIVLKKLHLETWEGWSSQCLRDWGPFLSLAIPSMLMMCVEWWAYEIGSFLMGLLGVVDLSGQAIIYEVATVVYMIPMGLGMAVCVRVGTALGAADTLQAKRSAVSGLLCTAGTSLVVGTLLGLLNSQLGYIFTSDEEVIALVNQVLPIYIVFQLVEAVCCVFGGVLRGTGKQAFGAIVNAIMYYIVGLPLGIVLTFVVGMRIMGLWLGMLTCIFLAAVTFVVYAVQLDWKLAAEEAQKHAGLQQQQQQQQQQGAECTAPSPGPDKAVVSSVATGCNPGIALTMYSRPGCHVDFYGRPEAAPAPAAPASRLSVRQLLFRRGAALAASVAVLMAGLLVRVLTTGY.

Over 1–62 the chain is Cytoplasmic; the sequence is MNTAFAGFDE…PRGFWDEARA (62 aa). The helical transmembrane segment at 63–83 threads the bilayer; the sequence is LFVLSGPLFLFQVLNFLTYVV. Over 84–95 the chain is Extracellular; it reads GTVFCGHLGKVE. Residues 96-116 traverse the membrane as a helical segment; it reads LASVTLGVAFVNVCGVSVGAG. Residues 117–145 lie on the Cytoplasmic side of the membrane; sequence LSSACDTLMSQSFGSPNKKHVGVILQRGS. The helical transmembrane segment at 146–166 threads the bilayer; it reads LILLLCCLPCWALFLNTQHIL. Topologically, residues 167–182 are extracellular; sequence LLFRQDPAVSRLTQDY. A helical transmembrane segment spans residues 183–203; it reads AMIFIPGLPAIFLYSLLAKYL. Topologically, residues 204–212 are cytoplasmic; the sequence is QNQGIVWPQ. Residues 213 to 233 form a helical membrane-spanning segment; sequence VLSGVVGNCVNGVANYALVSV. Residues 234–241 lie on the Extracellular side of the membrane; it reads LNLGVRGS. A helical transmembrane segment spans residues 242–262; the sequence is AYANTISQFVQAAFLFLHIVL. Topologically, residues 263–281 are cytoplasmic; the sequence is KKLHLETWEGWSSQCLRDW. A helical membrane pass occupies residues 282–301; it reads GPFLSLAIPSMLMMCVEWWA. The Extracellular segment spans residues 302 to 320; that stretch reads YEIGSFLMGLLGVVDLSGQ. A helical transmembrane segment spans residues 321–341; sequence AIIYEVATVVYMIPMGLGMAV. Topologically, residues 342-361 are cytoplasmic; the sequence is CVRVGTALGAADTLQAKRSA. A helical transmembrane segment spans residues 362–382; it reads VSGLLCTAGTSLVVGTLLGLL. Over 383–402 the chain is Extracellular; the sequence is NSQLGYIFTSDEEVIALVNQ. The helical transmembrane segment at 403–423 threads the bilayer; that stretch reads VLPIYIVFQLVEAVCCVFGGV. Residues 424–437 lie on the Cytoplasmic side of the membrane; the sequence is LRGTGKQAFGAIVN. A helical transmembrane segment spans residues 438–458; it reads AIMYYIVGLPLGIVLTFVVGM. Residue R459 is a topological domain, extracellular. A helical transmembrane segment spans residues 460–480; the sequence is IMGLWLGMLTCIFLAAVTFVV. Residues 481 to 577 lie on the Cytoplasmic side of the membrane; that stretch reads YAVQLDWKLA…LSVRQLLFRR (97 aa). Residues 578–598 form a helical membrane-spanning segment; sequence GAALAASVAVLMAGLLVRVLT. At 599–601 the chain is on the extracellular side; that stretch reads TGY.

It belongs to the multi antimicrobial extrusion (MATE) (TC 2.A.66.1) family. In terms of tissue distribution, expressed in renal cortical tissues.

Its subcellular location is the cell membrane. The protein localises to the apical cell membrane. It catalyses the reaction thiamine(out) + H(+)(in) = thiamine(in) + H(+)(out). The enzyme catalyses estrone 3-sulfate(in) + H(+)(out) = estrone 3-sulfate(out) + H(+)(in). It carries out the reaction creatinine(in) + H(+)(out) = creatinine(out) + H(+)(in). Multidrug efflux pump that functions as a H(+)/organic cation antiporter. Mediates the efflux of cationic compounds, such as the model cations, tetraethylammonium (TEA) and 1-methyl-4-phenylpyridinium (MPP+), the platinum-based drug oxaliplatin or weak bases that are positively charged at physiological pH, cimetidine or the antidiabetic drug metformin. Mediates the efflux of the endogenous compounds creatinine, thiamine and estrone-3-sulfate. Plays a physiological role in the excretion of drugs, toxins and endogenous metabolites through the kidney. This chain is Multidrug and toxin extrusion protein 2 (SLC47A2), found in Oryctolagus cuniculus (Rabbit).